We begin with the raw amino-acid sequence, 296 residues long: Cobalamin trafficking protein CblD (296 aa).

Residues Met-1–Gly-38 constitute a mitochondrion transit peptide. At Lys-203 the chain carries N6-acetyllysine.

As to quaternary structure, heterodimer with MMACHC. Forms a multiprotein complex with MMACHC, MTR and MTRR.

The protein resides in the cytoplasm. Its subcellular location is the mitochondrion. In terms of biological role, involved in cobalamin metabolism and trafficking. Plays a role in regulating the biosynthesis and the proportion of two coenzymes, methylcob(III)alamin (MeCbl) and 5'-deoxyadenosylcobalamin (AdoCbl). Promotes oxidation of cob(II)alamin bound to MMACHC. The processing of cobalamin in the cytosol occurs in a multiprotein complex composed of at least MMACHC, MMADHC, MTRR (methionine synthase reductase) and MTR (methionine synthase) which may contribute to shuttle safely and efficiently cobalamin towards MTR in order to produce methionine. In Rattus norvegicus (Rat), this protein is Cobalamin trafficking protein CblD (Mmadhc).